Consider the following 654-residue polypeptide: Acetyl-coenzyme A synthetase (654 aa).

CoA contacts are provided by residues 190–193 (RGGK) and T313. ATP contacts are provided by residues 389-391 (GEP), 413-418 (DTWWQT), D504, and R519. S527 provides a ligand contact to CoA. Residue R530 participates in ATP binding. Mg(2+) is bound by residues V541, H543, and V546. Position 613 is an N6-acetyllysine (K613).

The protein belongs to the ATP-dependent AMP-binding enzyme family. It depends on Mg(2+) as a cofactor. Post-translationally, acetylated. Deacetylation by the SIR2-homolog deacetylase activates the enzyme.

It catalyses the reaction acetate + ATP + CoA = acetyl-CoA + AMP + diphosphate. Catalyzes the conversion of acetate into acetyl-CoA (AcCoA), an essential intermediate at the junction of anabolic and catabolic pathways. AcsA undergoes a two-step reaction. In the first half reaction, AcsA combines acetate with ATP to form acetyl-adenylate (AcAMP) intermediate. In the second half reaction, it can then transfer the acetyl group from AcAMP to the sulfhydryl group of CoA, forming the product AcCoA. This Leptospira biflexa serovar Patoc (strain Patoc 1 / Ames) protein is Acetyl-coenzyme A synthetase.